The following is a 255-amino-acid chain: Proteasome subunit alpha (255 aa).

A disordered region spans residues 224-255 (RLEELLGERGPAQHAPEEPADPEPEPPIAPPG).

The protein belongs to the peptidase T1A family. In terms of assembly, the 20S proteasome core is composed of 14 alpha and 14 beta subunits that assemble into four stacked heptameric rings, resulting in a barrel-shaped structure. The two inner rings, each composed of seven catalytic beta subunits, are sandwiched by two outer rings, each composed of seven alpha subunits. The catalytic chamber with the active sites is on the inside of the barrel. Has a gated structure, the ends of the cylinder being occluded by the N-termini of the alpha-subunits. Is capped by the proteasome-associated ATPase, ARC.

The protein localises to the cytoplasm. Its pathway is protein degradation; proteasomal Pup-dependent pathway. Its activity is regulated as follows. The formation of the proteasomal ATPase ARC-20S proteasome complex, likely via the docking of the C-termini of ARC into the intersubunit pockets in the alpha-rings, may trigger opening of the gate for substrate entry. Interconversion between the open-gate and close-gate conformations leads to a dynamic regulation of the 20S proteasome proteolysis activity. Its function is as follows. Component of the proteasome core, a large protease complex with broad specificity involved in protein degradation. The polypeptide is Proteasome subunit alpha (Nocardioides sp. (strain ATCC BAA-499 / JS614)).